The primary structure comprises 513 residues: MQLSPSEISGLIKKRIEKFDNSVELKSEGSIVSVADGIVTIYGLDDVTAGEMIKLPGDVYGLALNLNTDSVGAVVLGDYEHIKEGDKAYCTGRILEVPVGEALLGRVVDALGNPIDGRGEIETAHSSPIEKIAPGVIWRKSVDQALQTGIKSIDSMVPIGRGQRELIIGDRQIGKTAIAIDAIINQKGTGVKCIYVAIGQKASSIANIVRQLEEHGAMEHTIIVAATASDSAALQYIAPYAGCSMGEYFRDRGEDALIVYDDLTKQAWAYRQISLLLRRPPGREAYPGDVFYLHSRLLERAARVNEEYVERFTNGEVKGKTGSLTALPIIETQAGDISAFVPTNVISITDGQIFLETDLFNSGLRPAINPGNSVSRVGGAAQTKIIKKLGGGIRLALAQFRELEAFSQFASDLDEATRSQLNRGQRVTELLKQKQFSTLSIALMALSLYAADNGYLDSLEVSEVIPFESALHALAENKYAEVVAEINETGKYDAEIAEKLKTIVEDCKANQAW.

169–176 (GDRQIGKT) is a binding site for ATP.

This sequence belongs to the ATPase alpha/beta chains family. F-type ATPases have 2 components, CF(1) - the catalytic core - and CF(0) - the membrane proton channel. CF(1) has five subunits: alpha(3), beta(3), gamma(1), delta(1), epsilon(1). CF(0) has three main subunits: a(1), b(2) and c(9-12). The alpha and beta chains form an alternating ring which encloses part of the gamma chain. CF(1) is attached to CF(0) by a central stalk formed by the gamma and epsilon chains, while a peripheral stalk is formed by the delta and b chains.

Its subcellular location is the cell inner membrane. It catalyses the reaction ATP + H2O + 4 H(+)(in) = ADP + phosphate + 5 H(+)(out). In terms of biological role, produces ATP from ADP in the presence of a proton gradient across the membrane. The alpha chain is a regulatory subunit. This Francisella philomiragia subsp. philomiragia (strain ATCC 25017 / CCUG 19701 / FSC 153 / O#319-036) protein is ATP synthase subunit alpha.